Here is a 280-residue protein sequence, read N- to C-terminus: Ribosomal RNA small subunit methyltransferase I (280 aa).

Belongs to the methyltransferase superfamily. RsmI family.

The protein localises to the cytoplasm. It catalyses the reaction cytidine(1402) in 16S rRNA + S-adenosyl-L-methionine = 2'-O-methylcytidine(1402) in 16S rRNA + S-adenosyl-L-homocysteine + H(+). In terms of biological role, catalyzes the 2'-O-methylation of the ribose of cytidine 1402 (C1402) in 16S rRNA. This chain is Ribosomal RNA small subunit methyltransferase I, found in Rickettsia prowazekii (strain Madrid E).